Here is a 129-residue protein sequence, read N- to C-terminus: Fluoride-specific ion channel FluC 2 (129 aa).

A helical transmembrane segment spans residues 19–39; that stretch reads GLGLVVPAAAVGGFPLGTLFI. Na(+) is bound by residues Gly-74 and Thr-77. A helical membrane pass occupies residues 95-115; the sequence is FGMAAVYIAASLFGGLLASWA.

The protein belongs to the fluoride channel Fluc/FEX (TC 1.A.43) family.

The protein resides in the cell membrane. It catalyses the reaction fluoride(in) = fluoride(out). Its activity is regulated as follows. Na(+) is not transported, but it plays an essential structural role and its presence is essential for fluoride channel function. Functionally, fluoride-specific ion channel. Important for reducing fluoride concentration in the cell, thus reducing its toxicity. The chain is Fluoride-specific ion channel FluC 2 from Geobacillus kaustophilus (strain HTA426).